A 379-amino-acid polypeptide reads, in one-letter code: Chaperone protein DnaJ (379 aa).

In terms of domain architecture, J spans 5 to 70 (DYYETLGCDR…QKRAAYDRFG (66 aa)). A CR-type zinc finger spans residues 134-212 (GKTAQIKIPT…CGGAGRVTRE (79 aa)). The Zn(2+) site is built by cysteine 147, cysteine 150, cysteine 164, cysteine 167, cysteine 186, cysteine 189, cysteine 200, and cysteine 203. 4 CXXCXGXG motif repeats span residues 147 to 154 (CETCSGTG), 164 to 171 (CRMCGGAG), 186 to 193 (CPNCQGRG), and 200 to 207 (CSDCGGAG).

Belongs to the DnaJ family. In terms of assembly, homodimer. Requires Zn(2+) as cofactor.

The protein resides in the cytoplasm. Participates actively in the response to hyperosmotic and heat shock by preventing the aggregation of stress-denatured proteins and by disaggregating proteins, also in an autonomous, DnaK-independent fashion. Unfolded proteins bind initially to DnaJ; upon interaction with the DnaJ-bound protein, DnaK hydrolyzes its bound ATP, resulting in the formation of a stable complex. GrpE releases ADP from DnaK; ATP binding to DnaK triggers the release of the substrate protein, thus completing the reaction cycle. Several rounds of ATP-dependent interactions between DnaJ, DnaK and GrpE are required for fully efficient folding. Also involved, together with DnaK and GrpE, in the DNA replication of plasmids through activation of initiation proteins. The chain is Chaperone protein DnaJ from Xanthobacter autotrophicus (strain ATCC BAA-1158 / Py2).